Consider the following 1410-residue polypeptide: Non-secreted LysM effector LysM15 (1410 aa).

2 consecutive LysM domains span residues 1179-1225 (TTYT…DICM) and 1231-1277 (TQYT…EILG). Residues 1291-1303 (TTGDGITTTPGNG) show a composition bias toward low complexity. The segment at 1291 to 1317 (TTGDGITTTPGNGEYAQGVVSPPENST) is disordered. One can recognise a LysM 3 domain in the interval 1328–1375 (RWYSATADDLCVQICLKSGVSAKLFKAANPSLAADCDNSLIAGDAYCV).

This sequence belongs to the secreted LysM effector family.

Functionally, non-secreted LysM effector that might be involved in manipulation of host defenses for successful infection. This is Non-secreted LysM effector LysM15 from Penicillium expansum (Blue mold rot fungus).